Here is a 328-residue protein sequence, read N- to C-terminus: BRISC and BRCA1-A complex member 1 (328 aa).

The segment covering Met1–Thr13 has biased composition (polar residues). The interval Met1–Gln84 is disordered. Low complexity predominate over residues Pro64–Asn74. The interval Val96–Leu297 is VWFA-like.

The protein belongs to the BABAM1 family. In terms of assembly, component of the ARISC complex, at least composed of uimc1/rap80, abraxas1, brcc3/brcc36, BABAM2 and babam1/nba1. Component of the BRCA1-A complex, at least composed of brca1, bard1, uimc1/rap80, abraxas1, brcc3/brcc36, BABAM2 and babam1/nba1. In the BRCA1-A complex, interacts directly with abraxas1 and BABAM2. Component of the BRISC complex, at least composed of abraxas2, brcc3/brcc36, babam2 and babam1/nba1.

It localises to the cytoplasm. Its subcellular location is the nucleus. In terms of biological role, component of the BRCA1-A complex, a complex that specifically recognizes 'Lys-63'-linked ubiquitinated histones H2A and H2AX at DNA lesions sites, leading to target the BRCA1-BARD1 heterodimer to sites of DNA damage at double-strand breaks (DSBs). The BRCA1-A complex also possesses deubiquitinase activity that specifically removes 'Lys-63'-linked ubiquitin on histones H2A and H2AX. In the BRCA1-A complex, it is required for the complex integrity and its localization at DSBs. Component of the BRISC complex, a multiprotein complex that specifically cleaves 'Lys-63'-linked ubiquitin in various substrates. In these 2 complexes, it is probably required to maintain the stability of babam2 and help the 'Lys-63'-linked deubiquitinase activity mediated by brcc3/brcc36 component. The BRISC complex is required for normal mitotic spindle assembly and microtubule attachment to kinetochores via its role in deubiquitinating numa1. Plays a role in interferon signaling via its role in the deubiquitination of the interferon receptor ifnar1; deubiquitination increases ifnar1 activity by enhancing its stability and cell surface expression. Down-regulates the response to bacterial lipopolysaccharide (LPS) via its role in ifnar1 deubiquitination. The protein is BRISC and BRCA1-A complex member 1 (babam1) of Xenopus laevis (African clawed frog).